A 743-amino-acid chain; its full sequence is Dolichyl-phosphate-mannose--protein mannosyltransferase 5 (743 aa).

Over 1–46 the chain is Lumenal; sequence MNKEHLLKVDPIPDVTIKRGPLRSFLITKPCDNLSSLRTVTSSKEK. Residue Asn33 is glycosylated (N-linked (GlcNAc...) asparagine). Residues 47-67 form a helical membrane-spanning segment; that stretch reads LLVGCLLIFTAIVRLHNISLP. Topologically, residues 68–129 are cytoplasmic; it reads NSVVFGENEV…IGTEYTANVP (62 aa). Residues 130 to 150 traverse the membrane as a helical segment; it reads YVAMRFFSATLGIVSVLVLYL. Residues 151–158 are Lumenal-facing; the sequence is TLRVSGVK. Residues 159–179 traverse the membrane as a helical segment; the sequence is IAVAAICAVCFAIENSFVTLS. Arg180 is a topological domain (cytoplasmic). Residues 181 to 201 form a helical membrane-spanning segment; sequence FTLIEGPFVFFMACAVYFFRR. Residues 202 to 231 are Lumenal-facing; the sequence is SELYLPNSCKANKSLLAASIALGFAVSSKW. N-linked (GlcNAc...) asparagine glycosylation occurs at Asn213. Residues 232 to 252 traverse the membrane as a helical segment; it reads AGLFTIAWAGIIVLWRVWFMI. At 253-264 the chain is on the cytoplasmic side; that stretch reads GDLSRPIGSSIK. A helical membrane pass occupies residues 265–285; that stretch reads YMAFQFTCLLAIPAFIYFLIF. Topologically, residues 286–583 are lumenal; that stretch reads SVHIKTLNVN…GREVYFLGNA (298 aa). One can recognise an MIR 1 domain in the interval 320-374; it reads VAEVAVGSAVSLNHVGTAGGYLHSHLHNYPAGSMQQQVTLYPHIDQNNKWIIELA. N-linked (GlcNAc...) asparagine glycosylation is found at Asn380 and Asn386. MIR domains follow at residues 384–444 and 454–510; these read FQNL…IEID and QEHI…IEEN. A helical membrane pass occupies residues 584–604; that stretch reads VLWWSVTAFICTFIIGVAVEL. The Cytoplasmic portion of the chain corresponds to 605 to 623; it reads LAWKLGVNILRDKHIINFH. Residues 624 to 644 traverse the membrane as a helical segment; sequence YQVFQYLLGFAAHYFPYFFVG. Residues 645 to 646 are Lumenal-facing; the sequence is QK. The chain crosses the membrane as a helical span at residues 647–667; it reads LFLYDYLPAYYFGILAFGHAL. Residues 668–683 are Cytoplasmic-facing; the sequence is DLISTYISNKRNNTGY. A helical membrane pass occupies residues 684 to 704; it reads IVVAIFMVVCFYFFSEHSPLI. Residues 705 to 743 lie on the Lumenal side of the membrane; sequence YATGWSSNLCKRSKWLGSWDFYCNSLLLSDSHYELNAES.

This sequence belongs to the glycosyltransferase 39 family. PMT3 and PMT5 form a functional heterodimer. Also forms a minor complex with PMT2.

Its subcellular location is the endoplasmic reticulum membrane. The catalysed reaction is a di-trans,poly-cis-dolichyl beta-D-mannosyl phosphate + L-seryl-[protein] = 3-O-(alpha-D-mannosyl)-L-seryl-[protein] + a di-trans,poly-cis-dolichyl phosphate + H(+). The enzyme catalyses a di-trans,poly-cis-dolichyl beta-D-mannosyl phosphate + L-threonyl-[protein] = 3-O-(alpha-D-mannosyl)-L-threonyl-[protein] + a di-trans,poly-cis-dolichyl phosphate + H(+). Its pathway is protein modification; protein glycosylation. Functionally, protein O-mannosyltransferase involved in O-glycosylation which is essential for cell wall rigidity. Forms a heterodimeric complex with PMT3 and more rarely with PMT2 to transfer mannose from Dol-P-mannose to Ser or Thr residues on proteins. This Saccharomyces cerevisiae (strain ATCC 204508 / S288c) (Baker's yeast) protein is Dolichyl-phosphate-mannose--protein mannosyltransferase 5.